The sequence spans 154 residues: Aspartate carbamoyltransferase regulatory chain (154 aa).

C110, C115, C136, and C139 together coordinate Zn(2+).

The protein belongs to the PyrI family. As to quaternary structure, contains catalytic and regulatory chains. It depends on Zn(2+) as a cofactor.

Its function is as follows. Involved in allosteric regulation of aspartate carbamoyltransferase. This is Aspartate carbamoyltransferase regulatory chain from Halobacterium salinarum (strain ATCC 700922 / JCM 11081 / NRC-1) (Halobacterium halobium).